A 139-amino-acid chain; its full sequence is von Hippel-Lindau-like protein (139 aa).

The interval 1 to 22 (MPWRAGNGVGLEAQAGTQEAGP) is disordered. A beta-domain region spans residues 54–135 (SRIIICNHSP…GQPVFANITL (82 aa)).

The protein belongs to the VHL family. As to quaternary structure, interacts via the beta domain with the ODD domain of HIF1A. This interaction is independent of prolyl hydroxylation of HIF1A. Abundantly expressed in the placenta.

In terms of biological role, functions as a dominant-negative VHL to serve as a protector of HIFalpha. This Homo sapiens (Human) protein is von Hippel-Lindau-like protein (VHLL).